We begin with the raw amino-acid sequence, 156 residues long: MNFNATLIGQTVAFIIFVWFCMKFVWPPLMNAIEERQKRIADGLADADRAVKDLELAQAKATDQLKEAKVTANEIIEQANKRKAQIVEEAKTEANAERAKIIAQGKAEIEAERNRVKEDLRKQVATLAIMGAEKILERSIDPAAHSDIVNKLVAEI.

Residues Leu-7 to Pro-27 traverse the membrane as a helical segment.

It belongs to the ATPase B chain family. In terms of assembly, F-type ATPases have 2 components, F(1) - the catalytic core - and F(0) - the membrane proton channel. F(1) has five subunits: alpha(3), beta(3), gamma(1), delta(1), epsilon(1). F(0) has three main subunits: a(1), b(2) and c(10-14). The alpha and beta chains form an alternating ring which encloses part of the gamma chain. F(1) is attached to F(0) by a central stalk formed by the gamma and epsilon chains, while a peripheral stalk is formed by the delta and b chains.

It is found in the cell inner membrane. F(1)F(0) ATP synthase produces ATP from ADP in the presence of a proton or sodium gradient. F-type ATPases consist of two structural domains, F(1) containing the extramembraneous catalytic core and F(0) containing the membrane proton channel, linked together by a central stalk and a peripheral stalk. During catalysis, ATP synthesis in the catalytic domain of F(1) is coupled via a rotary mechanism of the central stalk subunits to proton translocation. Functionally, component of the F(0) channel, it forms part of the peripheral stalk, linking F(1) to F(0). This is ATP synthase subunit b from Shewanella baltica (strain OS155 / ATCC BAA-1091).